Here is a 284-residue protein sequence, read N- to C-terminus: Gigasin-3a (284 aa).

The tract at residues 202 to 284 (GLDNPLPNPR…FKAGRKNNRN (83 aa)) is disordered. A compositionally biased stretch (low complexity) spans 223–245 (SSPLPESTPKSSTKTSSASPIKS). The segment covering 246–257 (RQGKKLRGKKQN) has biased composition (basic residues). Residues 258–267 (KTGNTRFTYR) show a composition bias toward polar residues. Basic residues predominate over residues 268 to 284 (NNKRNIKFKAGRKNNRN).

In terms of tissue distribution, component of the organic matrix of calcified shell layers.

The protein is Gigasin-3a of Magallana gigas (Pacific oyster).